A 426-amino-acid chain; its full sequence is Putative two-component response regulator ARR20 (426 aa).

The Response regulatory domain occupies 40–155; that stretch reads SNRVLLVGAD…VIAVLWRHVY (116 aa). D91 is modified (4-aspartylphosphate). A disordered region spans residues 161–216; that stretch reads KSGLDKPGESGTVESDPDEYDDLEQDNLYESNEEGSKNTCDHKEEKSPTKKPRMQW. Residues 175–193 are compositionally biased toward acidic residues; it reads SDPDEYDDLEQDNLYESNE. The segment covering 194–208 has biased composition (basic and acidic residues); it reads EGSKNTCDHKEEKSP. The Nuclear localization signal motif lies at 210 to 213; that stretch reads KKPR. A DNA-binding region (myb-like GARP) is located at residues 213–268; the sequence is RMQWTPELHHKFEVAVEKMGSLEKAFPKTILKYMQEELNVQGLTRNNVASHLQKYR.

This sequence belongs to the ARR family. Type-B subfamily. Binds the target DNA as a monomer. Post-translationally, two-component system major event consists of a His-to-Asp phosphorelay between a sensor histidine kinase (HK) and a response regulator (RR). In plants, the His-to-Asp phosphorelay involves an additional intermediate named Histidine-containing phosphotransfer protein (HPt). This multistep phosphorelay consists of a His-Asp-His-Asp sequential transfer of a phosphate group between first a His and an Asp of the HK protein, followed by the transfer to a conserved His of the HPt protein and finally the transfer to an Asp in the receiver domain of the RR protein. In terms of tissue distribution, predominantly expressed in mature pistil tip. Also detected in the shoot apical meristem as well as vascular tissue and hydathodes of the leaves.

Its subcellular location is the nucleus. Its function is as follows. Putative transcriptional activator that binds specifically to the DNA sequence 5'-[AG]GATT-3'. Functions as a response regulator involved in His-to-Asp phosphorelay signal transduction system. Phosphorylation of the Asp residue in the receiver domain activates the ability of the protein to promote the transcription of target genes. Could directly activate some type-A response regulators in response to cytokinins. The polypeptide is Putative two-component response regulator ARR20 (ARR20) (Arabidopsis thaliana (Mouse-ear cress)).